The chain runs to 202 residues: Prohormone-4 (202 aa).

The signal sequence occupies residues 1–28 (MVQRLCTSVAALSLALSACVFFPRAVMA). The LDL-receptor class A domain maps to 46 to 86 (ACRPYEPFKCPGDDTCISIQYLCDGAPDCQDGYDEDSRLCT). Intrachain disulfides connect C47/C61, C55/C74, and C68/C85.

It is found in the secreted. This Apis mellifera (Honeybee) protein is Prohormone-4.